A 397-amino-acid polypeptide reads, in one-letter code: Arginine biosynthesis bifunctional protein ArgJ (397 aa).

Positions 147, 173, 184, 270, 392, and 397 each coordinate substrate. The active-site Nucleophile is the threonine 184.

Belongs to the ArgJ family. Heterotetramer of two alpha and two beta chains.

The protein resides in the cytoplasm. It catalyses the reaction N(2)-acetyl-L-ornithine + L-glutamate = N-acetyl-L-glutamate + L-ornithine. The enzyme catalyses L-glutamate + acetyl-CoA = N-acetyl-L-glutamate + CoA + H(+). It participates in amino-acid biosynthesis; L-arginine biosynthesis; L-ornithine and N-acetyl-L-glutamate from L-glutamate and N(2)-acetyl-L-ornithine (cyclic): step 1/1. It functions in the pathway amino-acid biosynthesis; L-arginine biosynthesis; N(2)-acetyl-L-ornithine from L-glutamate: step 1/4. Catalyzes two activities which are involved in the cyclic version of arginine biosynthesis: the synthesis of N-acetylglutamate from glutamate and acetyl-CoA as the acetyl donor, and of ornithine by transacetylation between N(2)-acetylornithine and glutamate. The sequence is that of Arginine biosynthesis bifunctional protein ArgJ from Staphylococcus epidermidis (strain ATCC 35984 / DSM 28319 / BCRC 17069 / CCUG 31568 / BM 3577 / RP62A).